Here is a 185-residue protein sequence, read N- to C-terminus: Ribosome-recycling factor (185 aa).

The protein belongs to the RRF family.

It localises to the cytoplasm. In terms of biological role, responsible for the release of ribosomes from messenger RNA at the termination of protein biosynthesis. May increase the efficiency of translation by recycling ribosomes from one round of translation to another. This chain is Ribosome-recycling factor, found in Streptococcus pneumoniae (strain P1031).